A 556-amino-acid chain; its full sequence is 2-succinyl-5-enolpyruvyl-6-hydroxy-3-cyclohexene-1-carboxylate synthase (556 aa).

It belongs to the TPP enzyme family. MenD subfamily. Homodimer. Requires Mg(2+) as cofactor. It depends on Mn(2+) as a cofactor. Thiamine diphosphate serves as cofactor.

It carries out the reaction isochorismate + 2-oxoglutarate + H(+) = 5-enolpyruvoyl-6-hydroxy-2-succinyl-cyclohex-3-ene-1-carboxylate + CO2. It functions in the pathway quinol/quinone metabolism; 1,4-dihydroxy-2-naphthoate biosynthesis; 1,4-dihydroxy-2-naphthoate from chorismate: step 2/7. It participates in quinol/quinone metabolism; menaquinone biosynthesis. Functionally, catalyzes the thiamine diphosphate-dependent decarboxylation of 2-oxoglutarate and the subsequent addition of the resulting succinic semialdehyde-thiamine pyrophosphate anion to isochorismate to yield 2-succinyl-5-enolpyruvyl-6-hydroxy-3-cyclohexene-1-carboxylate (SEPHCHC). The chain is 2-succinyl-5-enolpyruvyl-6-hydroxy-3-cyclohexene-1-carboxylate synthase from Escherichia coli (strain 55989 / EAEC).